Reading from the N-terminus, the 919-residue chain is Isoleucine--tRNA ligase (919 aa).

Residues 57–67 (PYANGDIHMGT) carry the 'HIGH' region motif. Residue glutamate 552 coordinates L-isoleucyl-5'-AMP. The short motif at 593–597 (KMSKS) is the 'KMSKS' region element. Lysine 596 provides a ligand contact to ATP. Zn(2+) is bound by residues cysteine 886, cysteine 889, cysteine 906, and cysteine 909.

Belongs to the class-I aminoacyl-tRNA synthetase family. IleS type 1 subfamily. As to quaternary structure, monomer. The cofactor is Zn(2+).

It localises to the cytoplasm. The enzyme catalyses tRNA(Ile) + L-isoleucine + ATP = L-isoleucyl-tRNA(Ile) + AMP + diphosphate. Its function is as follows. Catalyzes the attachment of isoleucine to tRNA(Ile). As IleRS can inadvertently accommodate and process structurally similar amino acids such as valine, to avoid such errors it has two additional distinct tRNA(Ile)-dependent editing activities. One activity is designated as 'pretransfer' editing and involves the hydrolysis of activated Val-AMP. The other activity is designated 'posttransfer' editing and involves deacylation of mischarged Val-tRNA(Ile). The chain is Isoleucine--tRNA ligase from Petrotoga mobilis (strain DSM 10674 / SJ95).